The chain runs to 450 residues: uncharacterized protein (450 aa).

The protein belongs to the heat shock protein 70 family.

This is an uncharacterized protein from Escherichia coli (strain K12).